A 21-amino-acid polypeptide reads, in one-letter code: Major outer membrane protein P44 (21 aa).

Monomer.

The protein localises to the cell outer membrane. This chain is Major outer membrane protein P44, found in Mannheimia haemolytica (Pasteurella haemolytica).